The primary structure comprises 722 residues: BTB/POZ domain-containing protein 9 (722 aa).

A BTB domain is found at 46 to 112 (ADVEFIVEEE…IYSGTLLLST (67 aa)). A BACK domain is found at 151–247 (CMILDAARLY…MNLEHLLQVV (97 aa)). Positions 565-593 (QDKNYLKKIADMEKEREKREKEKKTAKTD) form a coiled coil. Residues 577–594 (EKEREKREKEKKTAKTDD) are compositionally biased toward basic and acidic residues. Disordered regions lie at residues 577–626 (EKER…VLRS) and 640–722 (PLTP…RETL). A compositionally biased stretch (polar residues) spans 597–606 (IASTSGSSLA). Low complexity predominate over residues 607-626 (SGHAESPSTSSSSSQSVLRS). The span at 641 to 658 (LTPPALSPPGTPALPAPL) shows a compositional bias: pro residues. Over residues 670–679 (EQNQPSNISA) the composition is skewed to polar residues. A compositionally biased stretch (low complexity) spans 686–704 (SPSSRSNPSPSLSRSRSQS).

In terms of tissue distribution, detected in the brain (at protein level).

It is found in the cytoplasm. Essential for the homeostatic regulation of sleep and motor activity, by depressing hyperactivity and wakefulness. May function, at least in part, by ensuring dopamine biosynthesis. This Drosophila melanogaster (Fruit fly) protein is BTB/POZ domain-containing protein 9.